The sequence spans 562 residues: Protein wntless (562 aa).

The Cytoplasmic segment spans residues 1–15 (MSGTILENLSGRKLS). The helical transmembrane segment at 16–36 (ILVSSLMLCQVVCFLMGGLFA) threads the bilayer. Topologically, residues 37–239 (PVPAGHQTVL…AIHQNGGFTQ (203 aa)) are lumenal. 2 N-linked (GlcNAc...) asparagine glycosylation sites follow: Asn-58 and Asn-103. Residues 240–260 (VWLVLKTLLFPFVIGIMMWFW) traverse the membrane as a helical segment. At 261–275 (RRVHILQRSPALLEY) the chain is on the cytoplasmic side. The chain crosses the membrane as a helical span at residues 276 to 296 (MLFYLGGALSFLNLPLELLTL). Residues 297 to 311 (GVEMPYMLLLSDVRQ) are Lumenal-facing. Residues 312–332 (GIFYAMLLSFWLVFAGEHMLI) traverse the membrane as a helical segment. Over 333 to 344 (QDSPSKSTIRSR) the chain is Cytoplasmic. The chain crosses the membrane as a helical span at residues 345–365 (YWKHLSAVVVGCISLFVFDIC). Over 366-390 (ERGVQMRNPFYSIWTTPLGAKVAMS) the chain is Lumenal. The chain crosses the membrane as a helical span at residues 391–411 (FIVLAGVSAAIYFLFLCFMVW). Residues 412 to 441 (KVFKDIGDKRTSLPSMSQARRLHYEGLIYR) are Cytoplasmic-facing. Residues 442 to 462 (FKFLMLATLLCAGLTVAGFIM) form a helical membrane-spanning segment. At 463-482 (GQMAEGHWKWNENIEIQLTS) the chain is on the lumenal side. A helical membrane pass occupies residues 483–503 (AFLTGVYGMWNIYIFALIILY). Residues 504–562 (APSHKQWPTMRHSDETTQSNENIVASAASEEIEFSNLPSDSNPSEISSLTSFTRKVAFD) are Cytoplasmic-facing.

The protein belongs to the wntless family. In terms of assembly, interacts with wg; in the Golgi. Interacts with Vps35, a component of the retromer complex; wls stability is regulated by Vps35.

It localises to the presynaptic cell membrane. Its subcellular location is the postsynaptic cell membrane. The protein localises to the cell membrane. It is found in the endoplasmic reticulum membrane. The protein resides in the endosome membrane. It localises to the golgi apparatus membrane. Its function is as follows. A segment polarity gene required for wingless (wg)-dependent patterning processes, acting in both wg-sending cells and wg-target cells. In non-neuronal cells wls directs wg secretion. The wls traffic loop encompasses the Golgi, the cell surface, an endocytic compartment and a retrograde route leading back to the Golgi, and involves clathrin-mediated endocytosis and the retromer complex (a conserved protein complex consisting of Vps35 and Vps26). In neuronal cells (the larval motorneuron NMJ), the wg signal moves across the synapse via the release of wls-containing exosome-like vesicles. Postsynaptic wls is required for the trafficking of fz2 through the fz2-interacting protein Grip. The protein is Protein wntless of Drosophila grimshawi (Hawaiian fruit fly).